Reading from the N-terminus, the 296-residue chain is Magnetosome protein MamB (296 aa).

Residues 1–12 are Cytoplasmic-facing; that stretch reads MKFENCRDCREE. The segment at 1 to 214 is transmembrane domain (TMD); it reads MKFENCRDCR…GLMDSSVDTE (214 aa). A helical transmembrane segment spans residues 13–33; sequence VVWWAFTADICMTLFKGVLGL. Topologically, residues 34-83 are lumenal; the sequence is MSGSVALVADSLHSGADVVASGVTQLSLKISNKPADERYPFGYGNIQYIS. The helical transmembrane segment at 84 to 104 threads the bilayer; it reads SSIVGSLLLIGASFLMYGSVM. Over 105–112 the chain is Cytoplasmic; it reads KLISGTYE. Residues 113 to 133 form a helical membrane-spanning segment; it reads APSIFAAVGASVTVIVNELMY. The Lumenal segment spans residues 134-164; the sequence is RYQICVGNENNSPAIIANAWDNRSDAISSAA. A helical transmembrane segment spans residues 165–185; sequence VMVGVIASVIGFPIADTIAAI. Residues 186–296 lie on the Cytoplasmic side of the membrane; it reads GVSALVGRIG…SPAPAAAARA (111 aa). The interval 215–296 is C-terminal domain (CTD); sequence LLQTAWQVAM…SPAPAAAARA (82 aa).

This sequence belongs to the cation diffusion facilitator (CDF) transporter (TC 2.A.4) family. Forms heterodimers with MamM. Probably interacts with MamE.

The protein resides in the magnetosome membrane. Its function is as follows. Plays a dual, essential role in magnetosome formation; required for magnetosome vesicle formation as well as biomineralization. Probably binds and transports iron. Requires heterodimerization with MamM for stability. The sequence is that of Magnetosome protein MamB (mamB) from Paramagnetospirillum magneticum (strain ATCC 700264 / AMB-1) (Magnetospirillum magneticum).